The sequence spans 437 residues: Protein translocase subunit SecY (437 aa).

10 consecutive transmembrane segments (helical) span residues leucine 19–valine 39, leucine 69–leucine 89, valine 122–phenylalanine 142, isoleucine 157–leucine 177, glycine 189–isoleucine 209, tryptophan 219–valine 239, valine 276–alanine 296, proline 316–isoleucine 336, glycine 378–alanine 398, and glutamine 400–valine 420.

The protein belongs to the SecY/SEC61-alpha family. Component of the Sec protein translocase complex. Heterotrimer consisting of SecY, SecE and SecG subunits. The heterotrimers can form oligomers, although 1 heterotrimer is thought to be able to translocate proteins. Interacts with the ribosome. Interacts with SecDF, and other proteins may be involved. Interacts with SecA.

The protein localises to the cell membrane. In terms of biological role, the central subunit of the protein translocation channel SecYEG. Consists of two halves formed by TMs 1-5 and 6-10. These two domains form a lateral gate at the front which open onto the bilayer between TMs 2 and 7, and are clamped together by SecE at the back. The channel is closed by both a pore ring composed of hydrophobic SecY resides and a short helix (helix 2A) on the extracellular side of the membrane which forms a plug. The plug probably moves laterally to allow the channel to open. The ring and the pore may move independently. The protein is Protein translocase subunit SecY of Streptomyces galbus.